A 276-amino-acid chain; its full sequence is Large ribosomal subunit protein uL2 (276 aa).

Positions 219 to 276 are disordered; sequence TVRGSVMNPNDHPHGGGEGKQPIGRKQQMTPWGKKARGIKTRDKKKASTSMIVRRRNG. Positions 252 to 276 are enriched in basic residues; it reads KKARGIKTRDKKKASTSMIVRRRNG.

Belongs to the universal ribosomal protein uL2 family. Part of the 50S ribosomal subunit. Forms a bridge to the 30S subunit in the 70S ribosome.

In terms of biological role, one of the primary rRNA binding proteins. Required for association of the 30S and 50S subunits to form the 70S ribosome, for tRNA binding and peptide bond formation. It has been suggested to have peptidyltransferase activity; this is somewhat controversial. Makes several contacts with the 16S rRNA in the 70S ribosome. The protein is Large ribosomal subunit protein uL2 of Acholeplasma laidlawii (strain PG-8A).